The sequence spans 205 residues: Small ribosomal subunit protein uS4 (205 aa).

An S4 RNA-binding domain is found at 94-157 (SRLDTVVYRM…KQIPLIQESV (64 aa)).

This sequence belongs to the universal ribosomal protein uS4 family. In terms of assembly, part of the 30S ribosomal subunit. Contacts protein S5. The interaction surface between S4 and S5 is involved in control of translational fidelity.

One of the primary rRNA binding proteins, it binds directly to 16S rRNA where it nucleates assembly of the body of the 30S subunit. Its function is as follows. With S5 and S12 plays an important role in translational accuracy. This Rickettsia conorii (strain ATCC VR-613 / Malish 7) protein is Small ribosomal subunit protein uS4.